Consider the following 151-residue polypeptide: Chaperonin GroEL (151 aa).

Residue 41 to 45 (DGTTT) participates in ATP binding.

Belongs to the chaperonin (HSP60) family. Forms a cylinder of 14 subunits composed of two heptameric rings stacked back-to-back. Interacts with the co-chaperonin GroES.

It localises to the cytoplasm. The enzyme catalyses ATP + H2O + a folded polypeptide = ADP + phosphate + an unfolded polypeptide.. Functionally, together with its co-chaperonin GroES, plays an essential role in assisting protein folding. The GroEL-GroES system forms a nano-cage that allows encapsulation of the non-native substrate proteins and provides a physical environment optimized to promote and accelerate protein folding. This chain is Chaperonin GroEL, found in Mycobacterium marinum.